A 195-amino-acid chain; its full sequence is Peptidyl-tRNA hydrolase (195 aa).

Position 18 (Tyr-18) interacts with tRNA. His-23 acts as the Proton acceptor in catalysis. 3 residues coordinate tRNA: Phe-69, Asn-71, and Asn-117.

This sequence belongs to the PTH family. In terms of assembly, monomer.

It localises to the cytoplasm. It carries out the reaction an N-acyl-L-alpha-aminoacyl-tRNA + H2O = an N-acyl-L-amino acid + a tRNA + H(+). In terms of biological role, hydrolyzes ribosome-free peptidyl-tRNAs (with 1 or more amino acids incorporated), which drop off the ribosome during protein synthesis, or as a result of ribosome stalling. Catalyzes the release of premature peptidyl moieties from peptidyl-tRNA molecules trapped in stalled 50S ribosomal subunits, and thus maintains levels of free tRNAs and 50S ribosomes. This is Peptidyl-tRNA hydrolase from Hahella chejuensis (strain KCTC 2396).